A 235-amino-acid polypeptide reads, in one-letter code: Class A basic helix-loop-helix protein 9 (235 aa).

2 disordered regions span residues 1-69 (MLRG…RRMA) and 132-235 (GHLE…HPRS). Residues 55-67 (RRRARPVRSKARR) show a composition bias toward basic residues. Residues 65–117 (ARRMAANVRERKRILDYNEAFNALRRALRHDLGGKRLSKIATLRRAIHRIAAL) enclose the bHLH domain.

In terms of assembly, heterodimer. Efficient DNA binding requires dimerization with another bHLH protein. Interacts with TCF3, TCF4, and TCF12.

It localises to the nucleus. Its subcellular location is the cytoplasm. Functionally, transcription factor, which play a role in limb development. Is an essential player in the regulatory network governing transcription of genes implicated in limb morphogenesis. This Homo sapiens (Human) protein is Class A basic helix-loop-helix protein 9 (BHLHA9).